We begin with the raw amino-acid sequence, 205 residues long: Polyamine-modulated factor 1 (205 aa).

The tract at residues 1–28 is disordered; sequence MAEASSVNVGSGCAEKGPEELSQEPARP. Residues 140–190 are a coiled coil; it reads YLLQQRDALQRRVQRQEAENRQLADAVLAGRRQLEELQLQAQARQQAWQAL.

Component of the MIS12 complex composed of MIS12, DSN1, NSL1 and PMF1. Interacts with COPS7A. Interacts via its coiled-coil domain with the leucine-zipper domain of NFE2L2. The interaction with NFE2L2 is required for the transcriptional regulation of SSAT.

Its subcellular location is the nucleus. The protein localises to the chromosome. The protein resides in the centromere. It is found in the kinetochore. In terms of biological role, part of the MIS12 complex which is required for normal chromosome alignment and segregation and kinetochore formation during mitosis. May act as a cotranscription partner of NFE2L2 involved in regulation of polyamine-induced transcription of SSAT. The protein is Polyamine-modulated factor 1 (PMF1) of Bos taurus (Bovine).